The following is a 451-amino-acid chain: 2,4-dinitrotoluene dioxygenase system, large oxygenase component (451 aa).

One can recognise a Rieske domain in the interval 42-126 (WLFLTHDSLI…LQSVPFEKEL (85 aa)). The [2Fe-2S] cluster site is built by Cys-84, His-86, Cys-104, and His-107. Fe cation is bound by residues His-211, His-216, and Asp-365.

The protein belongs to the bacterial ring-hydroxylating dioxygenase alpha subunit family. As to quaternary structure, the 2,4-dinitrotoluene dioxygenase (DNTDO) multicomponent enzyme system is composed of an electron transfer component and a dioxygenase component (iron sulfur protein (ISP)). The electron transfer component is composed of a ferredoxin reductase (DntAa) and a ferredoxin (DntAb), and the dioxygenase component is formed of a large alpha subunit (DntAc) and a small beta subunit (DntAd). Requires [2Fe-2S] cluster as cofactor. The cofactor is Fe(2+).

The enzyme catalyses 2,4-dinitrotoluene + NADH + O2 = 4-methyl-5-nitrocatechol + nitrite + NAD(+). Its function is as follows. Component of the 2,4-dinitrotoluene dioxygenase (DNTDO) multicomponent enzyme system which catalyzes the incorporation of both atoms of molecular oxygen into 2,4-dinitrotoluene (DNT) to form 4-methyl-5-nitrocatechol (MNC) and nitrite. The alpha subunit has a catalytic role in the holoenzyme. Also able to convert naphthalene to cis-(1R,2S)-dihydroxy-1,2-dihydronaphthalene. This is 2,4-dinitrotoluene dioxygenase system, large oxygenase component from Burkholderia sp. (strain RASC).